We begin with the raw amino-acid sequence, 318 residues long: Deacetoxycephalosporin C hydroxylase (318 aa).

One can recognise a Fe2OG dioxygenase domain in the interval 158-271 (DADPVLRLRY…RTSSVFFLRP (114 aa)).

It belongs to the iron/ascorbate-dependent oxidoreductase family. In terms of assembly, monomer. It depends on Fe cation as a cofactor.

It carries out the reaction deacetoxycephalosporin C + 2-oxoglutarate + O2 = deacetylcephalosporin C + succinate + CO2. It functions in the pathway antibiotic biosynthesis; cephalosporin C biosynthesis. Functionally, hydroxylation of desacetoxicephalosporin C in 3'position to form deacetylcephalosporin C. In Streptomyces clavuligerus, this protein is Deacetoxycephalosporin C hydroxylase (cefF).